A 419-amino-acid chain; its full sequence is Monooxygenase CTB7 (419 aa).

This sequence belongs to the aromatic-ring hydroxylase family. KMO subfamily.

It participates in mycotoxin biosynthesis. Functionally, monooxygenase; part of the gene cluster that mediates the biosynthesis of cercosporin, a light-activated, non-host-selective toxin. The perylenequinone chromophore of cercosporin absorbs light energy to attain an electronically-activated triplet state and produces active oxygen species such as the hydroxyl radical, superoxide, hydrogen peroxide or singlet oxygen upon reaction with oxygen molecules. These reactive oxygen species cause damage to various cellular components including lipids, proteins and nucleic acids. The first step of cercosporin biosynthesis is performed by the polyketide synthase CTB1 which catalyzes the formation of nor-toralactone. The starter unit acyltransferase (SAT) domain of CTB1 initiates polyketide extension by the selective utilization of acetyl-CoA, which is elongated to the heptaketide in the beta-ketoacyl synthase (KS) domain by successive condensations with six malonyl units introduced by the malonyl acyltransferase (MAT) domain. The product template (PT) domain catalyzes C4-C9 and C2-C11 aldol cyclizations and dehydrations to a trihydroxynaphthalene, which is thought to be delivered to the thioesterase (TE) domain for product release. The bifunctional enzyme CTB3 then methylates nor-toralactone to toralactone before conducting an unusual oxidative aromatic ring opening. The O-methyltransferase CTB2 further methylates the nascent OH-6 of the CBT3 product, blocking further oxidation at this site before the reductase CTB6 reduces the 2-oxopropyl ketone at position C7, giving naphthalene. The FAD-dependent monooxygenase CTB5 in concert with the multicopper oxidase CTB12 are responsible for homodimerization of naphthalene with CTB7 installing the dioxepine moiety, finally producing cercosporin. The fasciclin domain-containing protein CTB11 might act with CTB5 and CTB12 whereas the roles of CTB9 and CTB10 have still to be elucidated. The polypeptide is Monooxygenase CTB7 (Cercospora beticola (Sugarbeet leaf spot fungus)).